Reading from the N-terminus, the 262-residue chain is ATP synthase subunit a (262 aa).

Helical transmembrane passes span 24–44 (AVHL…LVVF), 85–105 (IAPL…IDLV), 129–149 (DISA…FYTV), 194–214 (LFGN…MYMA), and 228–248 (LVWA…FMML).

This sequence belongs to the ATPase A chain family. As to quaternary structure, F-type ATPases have 2 components, CF(1) - the catalytic core - and CF(0) - the membrane proton channel. CF(1) has five subunits: alpha(3), beta(3), gamma(1), delta(1), epsilon(1). CF(0) has three main subunits: a(1), b(2) and c(9-12). The alpha and beta chains form an alternating ring which encloses part of the gamma chain. CF(1) is attached to CF(0) by a central stalk formed by the gamma and epsilon chains, while a peripheral stalk is formed by the delta and b chains.

The protein localises to the cell inner membrane. Its function is as follows. Key component of the proton channel; it plays a direct role in the translocation of protons across the membrane. The polypeptide is ATP synthase subunit a (Haemophilus ducreyi (strain 35000HP / ATCC 700724)).